A 214-amino-acid chain; its full sequence is Cdc42 effector protein 2 (214 aa).

Serine 2 carries the post-translational modification N-acetylserine. The CRIB domain maps to 30–44 (ISPPLGDFRHTIHIG). 5 positions are modified to phosphoserine: serine 31, serine 101, serine 137, serine 141, and serine 145. The disordered stretch occupies residues 119-177 (LTLPTAQAPPKPPRLHLESPQPSPQPSPQGAGNVDVWRIPEAGSPHNGMSPEPEAEEPF).

The protein belongs to the BORG/CEP family. As to quaternary structure, interacts with CDC42 and RHOQ in a GTP-dependent manner, and with SEPT7.

The protein localises to the endomembrane system. Its subcellular location is the cytoplasm. The protein resides in the cytoskeleton. Probably involved in the organization of the actin cytoskeleton. May act downstream of CDC42 to induce actin filament assembly leading to cell shape changes. Induces pseudopodia formation in fibroblasts in a CDC42-dependent manner. This Mus musculus (Mouse) protein is Cdc42 effector protein 2 (Cdc42ep2).